A 195-amino-acid chain; its full sequence is Probable WRKY transcription factor 56 (195 aa).

Polar residues predominate over residues 1–10; sequence MEGVDNTNPM. Disordered regions lie at residues 1 to 20 and 70 to 93; these read MEGVDNTNPMLTLEEGENNN and EMGGLVSNNSNNSDHNKNCNKGKG. The WRKY DNA-binding region spans 108–173; sequence SDDDVLDDGY…YEGVHNHPCE (66 aa).

This sequence belongs to the WRKY group II-c family.

It localises to the nucleus. In terms of biological role, transcription factor. Interacts specifically with the W box (5'-(T)TGAC[CT]-3'), a frequently occurring elicitor-responsive cis-acting element. The polypeptide is Probable WRKY transcription factor 56 (WRKY56) (Arabidopsis thaliana (Mouse-ear cress)).